A 491-amino-acid chain; its full sequence is ADP-specific phosphofructokinase (491 aa).

In terms of domain architecture, ADPK spans glutamate 4–glutamine 486. Positions 281, 312, and 470 each coordinate Mg(2+). Aspartate 470 acts as the Proton acceptor in catalysis.

This sequence belongs to the carbohydrate kinase PfkC family. The cofactor is Mg(2+).

The protein localises to the cytoplasm. The enzyme catalyses beta-D-fructose 6-phosphate + ADP = beta-D-fructose 1,6-bisphosphate + AMP + H(+). It participates in carbohydrate degradation; glycolysis. In terms of biological role, catalyzes the phosphorylation of fructose 6-phosphate to fructose 1,6-bisphosphate using ADP as the phosphate donor. The protein is ADP-specific phosphofructokinase of Methanosarcina acetivorans (strain ATCC 35395 / DSM 2834 / JCM 12185 / C2A).